Here is a 154-residue protein sequence, read N- to C-terminus: PTS system glucose-specific EIIA component (154 aa).

The PTS EIIA type-1 domain maps to 26–130; it reads DEVFKERMLG…SIKSPIIFTN (105 aa). Zn(2+)-binding residues include His-63 and His-78. His-78 acts as the Tele-phosphohistidine intermediate; for EIIA activity in catalysis. At His-78 the chain carries Phosphohistidine; by HPr.

Heterodimer with glycerol kinase (glpk). Zn(2+) serves as cofactor.

It is found in the cytoplasm. In terms of biological role, the phosphoenolpyruvate-dependent sugar phosphotransferase system (sugar PTS), a major carbohydrate active transport system, catalyzes the phosphorylation of incoming sugar substrates concomitantly with their translocation across the cell membrane. The enzyme II complex composed of PtsG and Crr is involved in glucose transport. In Mycoplasma capricolum subsp. capricolum (strain California kid / ATCC 27343 / NCTC 10154), this protein is PTS system glucose-specific EIIA component (crr).